The following is a 234-amino-acid chain: Cysteine proteinase inhibitor 6 (234 aa).

The N-terminal stretch at 1–24 is a signal peptide; the sequence is MMRSRFLLFIVFFSLSLFISSLIA. The residue at position 2 (M2) is an N-acetylalanine. Cystatin domains lie at 38 to 126 and 145 to 215; these read GGVG…KPAS and SGWR…FKVE. The short motif at 82–86 is the Secondary area of contact element; the sequence is QVVAG. The disordered stretch occupies residues 133-154; that stretch reads SSDLGCKQGEHESGWREVPGDD. The span at 140 to 154 shows a compositional bias: basic and acidic residues; the sequence is QGEHESGWREVPGDD. At S174 the chain carries Phosphoserine.

The protein belongs to the cystatin family. Phytocystatin subfamily.

The protein localises to the secreted. Its function is as follows. Specific inhibitor of cysteine proteinases. Probably involved in the regulation of endogenous processes and in defense against pests and pathogens. The polypeptide is Cysteine proteinase inhibitor 6 (CYS6) (Arabidopsis thaliana (Mouse-ear cress)).